We begin with the raw amino-acid sequence, 122 residues long: Large ribosomal subunit protein uL14c (122 aa).

It belongs to the universal ribosomal protein uL14 family. Part of the 50S ribosomal subunit.

The protein resides in the plastid. It localises to the chloroplast. Its function is as follows. Binds to 23S rRNA. The polypeptide is Large ribosomal subunit protein uL14c (Pleurastrum terricola (Filamentous green alga)).